A 454-amino-acid chain; its full sequence is Allantoinase (454 aa).

The Zn(2+) site is built by His60, His62, Lys147, His183, His239, and Asp312. At Lys147 the chain carries N6-carboxylysine.

Belongs to the metallo-dependent hydrolases superfamily. Allantoinase family. In terms of assembly, homotetramer. Zn(2+) serves as cofactor. In terms of processing, carboxylation allows a single lysine to coordinate two zinc ions.

It catalyses the reaction (S)-allantoin + H2O = allantoate + H(+). It functions in the pathway nitrogen metabolism; (S)-allantoin degradation; allantoate from (S)-allantoin: step 1/1. Functionally, catalyzes the conversion of allantoin (5-ureidohydantoin) to allantoic acid by hydrolytic cleavage of the five-member hydantoin ring. This is Allantoinase from Bacillus velezensis (strain DSM 23117 / BGSC 10A6 / LMG 26770 / FZB42) (Bacillus amyloliquefaciens subsp. plantarum).